A 274-amino-acid chain; its full sequence is Protein FAM210A (274 aa).

Over residues 51-66 (KWLHSQPKQQDSSTKT) the composition is skewed to polar residues. A disordered region spans residues 51-91 (KWLHSQPKQQDSSTKTPVHDLPSGSQHQSEESSPSAKSSIS). Positions 81–91 (ESSPSAKSSIS) are enriched in low complexity. A DUF1279 domain is found at 105 to 217 (DQSIGLLKRF…GYLSTPPLVK (113 aa)). Residues 124-144 (VLIPVHLVTSSFWFGSFYYAA) traverse the membrane as a helical segment. A coiled-coil region spans residues 221–274 (QDRMEETKELFTEKMEETRDIISGKMEETKDRISEKLQETKDRVAFRKKKNEEM).

This sequence belongs to the FAM210 family.

It localises to the membrane. Its subcellular location is the mitochondrion. The protein resides in the cytoplasm. Functionally, may play a role in the structure and strength of both muscle and bone. The sequence is that of Protein FAM210A (fam210a) from Xenopus tropicalis (Western clawed frog).